The chain runs to 233 residues: 2,3,4,5-tetrahydropyridine-2,6-dicarboxylate N-acetyltransferase (233 aa).

The protein belongs to the transferase hexapeptide repeat family. DapH subfamily.

The enzyme catalyses (S)-2,3,4,5-tetrahydrodipicolinate + acetyl-CoA + H2O = L-2-acetamido-6-oxoheptanedioate + CoA. It functions in the pathway amino-acid biosynthesis; L-lysine biosynthesis via DAP pathway; LL-2,6-diaminopimelate from (S)-tetrahydrodipicolinate (acetylase route): step 1/3. Functionally, catalyzes the transfer of an acetyl group from acetyl-CoA to tetrahydrodipicolinate. The chain is 2,3,4,5-tetrahydropyridine-2,6-dicarboxylate N-acetyltransferase from Oenococcus oeni (strain ATCC BAA-331 / PSU-1).